Consider the following 376-residue polypeptide: Copper-containing nitrite reductase (376 aa).

A signal peptide (tat-type signal) is located at residues 1 to 33 (MSEQFQMTRRSMLAGAAIAGAVTPLIGAVSAHA). 2 consecutive Plastocyanin-like domains span residues 98–193 (MTFN…IMVL) and 258–359 (GAVG…FAVT). Cu cation contacts are provided by H131, H136, H171, C172, H181, M186, and H342.

This sequence belongs to the multicopper oxidase family. In terms of assembly, homotrimer. Requires Cu(2+) as cofactor. The cofactor is Cu(+). FAD serves as cofactor. Predicted to be exported by the Tat system. The position of the signal peptide cleavage has not been experimentally proven.

The protein resides in the periplasm. It catalyses the reaction nitric oxide + Fe(III)-[cytochrome c] + H2O = Fe(II)-[cytochrome c] + nitrite + 2 H(+). It functions in the pathway nitrogen metabolism; nitrate reduction (denitrification); dinitrogen from nitrate: step 2/4. The polypeptide is Copper-containing nitrite reductase (nirK) (Rhizobium meliloti (strain 1021) (Ensifer meliloti)).